The sequence spans 330 residues: Protein C10 (330 aa).

It belongs to the poxviridae C4/C10 protein family.

This Homo sapiens (Human) protein is Protein C10.